We begin with the raw amino-acid sequence, 93 residues long: DNA/RNA-binding protein Alba (93 aa).

K11 is subject to N6-acetyllysine.

The protein belongs to the histone-like Alba family. Acetylated. Acetylation at Lys-11 decreases DNA-binding affinity.

Its subcellular location is the cytoplasm. The protein resides in the chromosome. Functionally, binds double-stranded DNA tightly but without sequence specificity. Involved in DNA compaction. This is DNA/RNA-binding protein Alba from Pyrococcus abyssi (strain GE5 / Orsay).